The primary structure comprises 1446 residues: E3 ubiquitin-protein ligase listerin (1446 aa).

HEAT repeat units lie at residues 71–108, 115–153, 324–361, 363–399, 413–450, 630–669, 684–721, 1046–1083, 1107–1144, 1165–1202, and 1251–1289; these read QTRE…LTTD, MLTM…VTNG, SLQK…LLQK, ENPA…TFSD, EILK…WIIE, AENV…AEDE, GDFE…FCDA, LRAL…PAFQ, SVAR…KLSL, LLDL…NALN, and FKSM…RLLI. The segment at 1395–1442 adopts an RING-type zinc-finger fold; that stretch reads CTICMMTVHQQTHQLPKIKCKQCKNKFHSNCLYKWFESSNQSTCPLCR.

This sequence belongs to the LTN1 family. Component of the ribosome quality control complex (RQC), composed of at least the E3 ubiquitin ligase ltn1 and nemf. The complex probably also contains tcf25 as well as vcp/p97 and its ubiquitin-binding cofactors. RQC forms a stable complex with 60S ribosomal subunits.

The protein resides in the cytoplasm. The protein localises to the cytosol. The enzyme catalyses S-ubiquitinyl-[E2 ubiquitin-conjugating enzyme]-L-cysteine + [acceptor protein]-L-lysine = [E2 ubiquitin-conjugating enzyme]-L-cysteine + N(6)-ubiquitinyl-[acceptor protein]-L-lysine.. The protein operates within protein modification; protein ubiquitination. Functionally, E3 ubiquitin-protein ligase. Component of the ribosome quality control complex (RQC), a ribosome-associated complex that mediates ubiquitination and extraction of incompletely synthesized nascent chains for proteasomal degradation. Ubiquitination leads to vcp/p97 recruitment for extraction and degradation of the incomplete translation product. The protein is E3 ubiquitin-protein ligase listerin of Caenorhabditis elegans.